A 150-amino-acid polypeptide reads, in one-letter code: Large ribosomal subunit protein uL11 (150 aa).

This sequence belongs to the universal ribosomal protein uL11 family. In terms of assembly, part of the ribosomal stalk of the 50S ribosomal subunit. Interacts with L10 and the large rRNA to form the base of the stalk. L10 forms an elongated spine to which L12 dimers bind in a sequential fashion forming a multimeric L10(L12)X complex. Post-translationally, one or more lysine residues are methylated.

Its function is as follows. Forms part of the ribosomal stalk which helps the ribosome interact with GTP-bound translation factors. In Jannaschia sp. (strain CCS1), this protein is Large ribosomal subunit protein uL11.